Reading from the N-terminus, the 179-residue chain is Adenine phosphoribosyltransferase (179 aa).

Belongs to the purine/pyrimidine phosphoribosyltransferase family. In terms of assembly, homodimer.

It is found in the cytoplasm. It catalyses the reaction AMP + diphosphate = 5-phospho-alpha-D-ribose 1-diphosphate + adenine. The protein operates within purine metabolism; AMP biosynthesis via salvage pathway; AMP from adenine: step 1/1. Catalyzes a salvage reaction resulting in the formation of AMP, that is energically less costly than de novo synthesis. This chain is Adenine phosphoribosyltransferase, found in Helicobacter pylori (strain HPAG1).